A 466-amino-acid chain; its full sequence is MKHAHLSRRKRAAPRPPGGRQKRASATQLYQTCKAAGTCPPDVIPKVEGTTVADQILKYGSMGVYFGGLGIGSGAGTGGRSGYVPLGSRPASIPEPLPRPPVTIEPVGPSDPSIVSLLEESRLIEAGVPAPTFPTHGGFEISTSEVSTPAVLDVSSGGSDVHVSVTSFTNPTFTEPSVLRPPPPVEASGRLVISASSVSTHSYEEIPMDTFVITGDHNYNTTSTPIPGSRAPARLGLYGRATQQVRVVDPAFITTPARLVTYDNPAYEGVDDATLQFSHSDIHQPPDPDFLDIVALHRPALTSRKGTVRFSRLGQRATLTTRSGKRIGAKVHFYHDLSPIAPAESIELQPLSSQGELYDIYADVDGQEDAAAVANTPLNSNSSGIASPWNTTVPLSAGADVTLQSGPDVSLDAPVAESPVHPGVPLRPSAHIILYGGDFYLHPSYLGIRRKRKRMHNFFSDVYVAA.

The segment covering Met1–Ala13 has biased composition (basic residues). Residues Met1 to Ser25 are disordered. A Nuclear localization signal motif is present at residues Ser7–Ala24. An intrachain disulfide couples Cys33 to Cys39. The Nuclear localization signal signature appears at Gly447–Met455.

The protein belongs to the papillomaviridae L2 protein family. As to quaternary structure, interacts with major capsid protein L1. Interacts with E2; this interaction inhibits E2 transcriptional activity but not the DNA replication function E2. Interacts with host GADD45GIP1. Interacts with host HSPA8; this interaction is required for L2 nuclear translocation. Interacts with host importins KPNB2 and KPNB3. Forms a complex with importin alpha2-beta1 heterodimers via interaction with the importin alpha2 adapter. Interacts with host DYNLT1; this interaction is essential for virus intracellular transport during entry. Interacts (via C-terminus) with host retromer subunits VPS35 and VPS29. In terms of processing, highly phosphorylated.

Its subcellular location is the virion. It localises to the host nucleus. The protein resides in the host early endosome. The protein localises to the host Golgi apparatus. Its function is as follows. Minor protein of the capsid that localizes along the inner surface of the virion, within the central cavities beneath the L1 pentamers. Plays a role in capsid stabilization through interaction with the major capsid protein L1. Once the virion enters the host cell, L2 escorts the genomic DNA into the nucleus by promoting escape from the endosomal compartments and traffic through the host Golgi network. Mechanistically, the C-terminus of L2 possesses a cell-penetrating peptide that protudes from the host endosome, interacts with host cytoplasmic retromer cargo and thereby mediates the capsid delivery to the host trans-Golgi network. Plays a role through its interaction with host dynein in the intracellular microtubule-dependent transport of viral capsid toward the nucleus. Mediates the viral genome import into the nucleus through binding to host importins. Once within the nucleus, L2 localizes viral genomes to host PML bodies in order to activate early gene expression for establishment of infection. Later on, promotes late gene expression by interacting with the viral E2 protein and by inhibiting its transcriptional activation functions. During virion assembly, encapsidates the genome by direct interaction with the viral DNA. This chain is Minor capsid protein L2, found in Macaca mulatta (Rhesus macaque).